We begin with the raw amino-acid sequence, 109 residues long: Large ribosomal subunit protein eL30 (109 aa).

The protein belongs to the eukaryotic ribosomal protein eL30 family.

This Yarrowia lipolytica (strain CLIB 122 / E 150) (Yeast) protein is Large ribosomal subunit protein eL30 (RPL30).